The primary structure comprises 858 residues: MQEQYNPQDLEQKIQKHWDDSKTFVVTEDASKEKFYCLSMFPYPSGRLHMGHVRNYTIGDVVSRYQRLQGKNVMQPIGWDAFGLPAENAAVKNKTAPAPWTYENIEYMKNQLKLLGFGYDWSREFATCTPEYYRWEQEFFTKLYNKGLVYKKTSSVNWCPNDQTVLANEQVEDGCCWRCDTPVEQKKIPQWFIKITEYAQELLDDLDTLDGWPDMVKTMQRNWIGRSEGVELSFAVNGEEAPLEVYTTRPDTLMGVTYVGIAAGHPLAEQAAAKNPELFAFTEECRNTKVAEAELATMEKKGMDTGLRAIHPLNGREVPIYVANFVLMDYGTGAVMAVPAHDQRDYEFATKYGLDIIPVIKPEDGSDVDVSDVAYTEKGVLFDSGEFDGLAFQDAFDAIAAKLEAEGKGKKTVNFRLRDWGVSRQRYWGAPIPMVTTEDGEVHPVPADQLPVILPEDVVMDGVTSPIKADKEWAKTTFNGEPALRETDTFDTFMESSWYYARYCSPQADDILDPEKANYWLPVDQYVGGIEHACMHLLYSRFFHKLLRDAGYVTSNEPFKQLLCQGMVLSDAFHHTNEKGTKEWIAPTDVTIERDAKGRIEKAVDDQGREVQHSGMIKMSKSKNNGIDPQEMVDKFGADTVRLFMMFAAPADMTLEWQESGVEGASRFLKRVWKLVHEHTTKGTTEALDVAALSGDQKALRRDVHKTIAKVSDDIGRRQTFNTAIAAIMELMNKLNKAPQGSAQDRALLDEALKAVVVMLYPMTPHASFAMWEALGESNIDTTAWPTFDEKALIEDEKTIVVMINGKLRAKLIVAADATEEQVKELGLNDENALKFLDGLTIRKVIYVPGKLLNIVAN.

The short motif at 42–52 (PYPSGRLHMGH) is the 'HIGH' region element. The 'KMSKS' region motif lies at 618-622 (KMSKS). Residue Lys621 coordinates ATP.

The protein belongs to the class-I aminoacyl-tRNA synthetase family.

It localises to the cytoplasm. The catalysed reaction is tRNA(Leu) + L-leucine + ATP = L-leucyl-tRNA(Leu) + AMP + diphosphate. This chain is Leucine--tRNA ligase, found in Aliivibrio salmonicida (strain LFI1238) (Vibrio salmonicida (strain LFI1238)).